The following is a 2261-amino-acid chain: Phospholipid-transporting ATPase ABCA1 (2261 aa).

Cys3 is lipidated: S-palmitoyl cysteine. A glycan (N-linked (GlcNAc...) asparagine) is linked at Asn14. A helical transmembrane segment spans residues 22 to 42 (TCQLLLEVAWPLFIFLILISV). Residue Cys23 is the site of S-palmitoyl cysteine attachment. Residues 43–639 (RLSYPPYEQH…DIFLRVMSRS (597 aa)) lie on the Extracellular side of the membrane. The tract at residues 69–80 (WVQGIICNANNP) is annulus domain 1. A disulfide bridge links Cys75 with Cys309. Residues Asn98, Asn151, Asn161, Asn196, Asn244, Asn292, Asn337, and Asn349 are each glycosylated (N-linked (GlcNAc...) asparagine). The annulus domain 2 stretch occupies residues 368–379 (SRIIWKALKPLL). N-linked (GlcNAc...) asparagine glycosylation is found at Asn400, Asn478, Asn489, and Asn521. Residues 564–594 (ERTNKIKDGYWDPGPRADPFEDMRYVWGGFA) form a gateway domain region. The next 5 helical transmembrane spans lie at 640-660 (MPLF…KSIV), 683-703 (FSWF…LVVI), 716-736 (SVVF…CFLI), 745-765 (LAAA…VLCV), and 777-797 (IFAS…FALF). The N-linked (GlcNAc...) asparagine glycan is linked to Asn820. The chain crosses the membrane as a helical span at residues 827 to 847 (MMLFDTFLYGVMTWYIEAVFP). The ABC transporter 1 domain occupies 899 to 1131 (VSIQNLVKVY…LGTGYYLTLV (233 aa)). 933–940 (GHNGAGKT) contributes to the ATP binding site. Residues 941-961 (TTMSILTGLFPPTSGTAYILG) form a helical membrane-spanning segment. Ser1042 is subject to Phosphoserine; by PKA. 2 S-palmitoyl cysteine lipidation sites follow: Cys1110 and Cys1111. N-linked (GlcNAc...) asparagine glycosylation is found at Asn1144 and Asn1294. Positions 1285 to 1310 (FTEDDAVDPNDSDIDPESRETDLLSG) are disordered. A compositionally biased stretch (acidic residues) spans 1287–1299 (EDDAVDPNDSDID). Position 1296 is a phosphoserine (Ser1296). Residues 1351–1371 (IVLPAVFVCIALVFSLIVPPF) form a helical membrane-spanning segment. The Extracellular segment spans residues 1372–1656 (GKYPSLELQP…ALMTTSVDVL (285 aa)). A glycan (N-linked (GlcNAc...) asparagine) is linked at Asn1453. Cysteines 1463 and 1477 form a disulfide. Residues Asn1499, Asn1504, and Asn1637 are each glycosylated (N-linked (GlcNAc...) asparagine). Helical transmembrane passes span 1657-1677 (VSIC…VFLI), 1703-1723 (FVWD…IFIC), 1735-1755 (LPVL…LMYP), 1768-1788 (VVLT…TFVL), 1802-1822 (ILKS…LIDM), and 1852-1872 (NLFA…LIQY). An ABC transporter 2 domain is found at 1912–2144 (LEIKELTKIY…FGDGYTIVVR (233 aa)). 1946–1953 (GVNGAGKS) serves as a coordination point for ATP. Asn2044 carries an N-linked (GlcNAc...) asparagine glycan. Ser2054 carries the post-translational modification Phosphoserine; by PKA. N-linked (GlcNAc...) asparagine glycosylation is present at Asn2238.

Belongs to the ABC transporter superfamily. ABCA family. Interacts with MEGF10. May interact with APOE1; functionally associated with APOE1 in the biogenesis of HDLs. Interacts with ABCA8; this interaction potentiates cholesterol efflux. Interacts with ABCA12 and NR1H2; this interaction is required for ABCA1 localization to the cell surface and is necessary for its normal activity and stability. Post-translationally, phosphorylation on Ser-2054 regulates phospholipid efflux. In terms of processing, palmitoylated by ZDHHC8. Palmitoylation is essential for localization to the plasma membrane. Widely expressed in adult tissues. Highest levels are found in pregnant uterus and uterus.

Its subcellular location is the cell membrane. The protein resides in the endosome. It catalyses the reaction ATP + H2O + phospholipidSide 1 = ADP + phosphate + phospholipidSide 2.. The catalysed reaction is a 1,2-diacyl-sn-glycero-3-phosphocholine(out) + ATP + H2O = a 1,2-diacyl-sn-glycero-3-phosphocholine(in) + ADP + phosphate + H(+). The enzyme catalyses a 1,2-diacyl-sn-glycero-3-phospho-L-serine(out) + ATP + H2O = a 1,2-diacyl-sn-glycero-3-phospho-L-serine(in) + ADP + phosphate + H(+). It carries out the reaction a sphingomyelin(in) + ATP + H2O = a sphingomyelin(out) + ADP + phosphate + H(+). It catalyses the reaction cholesterol(in) + ATP + H2O = cholesterol(out) + ADP + phosphate + H(+). Its activity is regulated as follows. ATPase activity is decreased by cholesterol and ceramide. ATPase activity is stimulated by phosphatidylcholine and to a lesser degree by phosphatidylserine and sphingomyelin. Phospholipid translocase activity is highly reduced by berylium fluoride and aluminum flouride and reduced by N-ethylmaleimide. In terms of biological role, catalyzes the translocation of specific phospholipids from the cytoplasmic to the extracellular/lumenal leaflet of membrane coupled to the hydrolysis of ATP. Thereby, participates in phospholipid transfer to apolipoproteins to form nascent high density lipoproteins/HDLs. Transports preferentially phosphatidylcholine over phosphatidylserine. May play a similar role in the efflux of intracellular cholesterol to apolipoproteins and the formation of nascent high density lipoproteins/HDLs. Translocates phospholipids from the outer face of the plasma membrane and forces it through its gateway and annulus into an elongated hydrophobic tunnel in its extracellular domain. This Mus musculus (Mouse) protein is Phospholipid-transporting ATPase ABCA1.